Here is a 408-residue protein sequence, read N- to C-terminus: Protein ZNF365 (408 aa).

A Phosphoserine modification is found at S16. Residues 26–51 (FRCPRCGDHTRFRSLSSLRAHLEFSH) form a C2H2-type; degenerate zinc finger. A phosphoserine mark is found at S139 and S146. Residues 170–298 (VEAVDRTIEK…QLEYYQSQQA (129 aa)) adopt a coiled-coil conformation. Position 176 is a phosphothreonine (T176). A Phosphoserine modification is found at S370.

In terms of assembly, homodimers. Interacts with NDE1 and NDEL1. Interacts with DISC1. Interacts with PARP1. Interacts with MCRS1. Expressed in cerebral cortex, hippocampus, olfactory tubercle and striatum.

The protein localises to the cytoplasm. The protein resides in the cytoskeleton. It is found in the microtubule organizing center. It localises to the centrosome. Functionally, involved in the positive regulation of oligodendrocyte differentiation during postnatal growth. Involved in the morphogenesis of basket cells in the somatosensory cortex during embryogenesis. Involved in dendritic arborization, morphogenesis of spine density dendrite, and establishment of postsynaptic dendrite density in cortical pyramidal neurons. Involved in the regulation of neurogenesis. Negatively regulates neurite outgrowth. Involved in homologous recombination (HR) repair pathway. Required for proper resolution of DNA double-strand breaks (DSBs) by HR. Is required for recovery of stalled replication forks, and directly contributes to genomic stability. Interacts with PARP1 and mediates MRE11-dependent DNA end resection during replication fork recovery. Contributes to genomic stability by preventing telomere dysfunction. The polypeptide is Protein ZNF365 (Znf365) (Rattus norvegicus (Rat)).